Consider the following 218-residue polypeptide: Probable GTP-binding protein EngB (218 aa).

Residues 23 to 200 form the EngB-type G domain; the sequence is EVPEIAFVGR…AQLLWQWAHP (178 aa). GTP is bound by residues 31-38, 58-62, 80-83, 150-153, and 179-181; these read GRSNAGKS, GRTQH, DLPG, TKAD, and FSA. S38 and T60 together coordinate Mg(2+).

This sequence belongs to the TRAFAC class TrmE-Era-EngA-EngB-Septin-like GTPase superfamily. EngB GTPase family. Mg(2+) is required as a cofactor.

Necessary for normal cell division and for the maintenance of normal septation. This is Probable GTP-binding protein EngB from Acidovorax ebreus (strain TPSY) (Diaphorobacter sp. (strain TPSY)).